Reading from the N-terminus, the 132-residue chain is Small ribosomal subunit protein uS8 (132 aa).

Belongs to the universal ribosomal protein uS8 family. As to quaternary structure, part of the 30S ribosomal subunit. Contacts proteins S5 and S12.

In terms of biological role, one of the primary rRNA binding proteins, it binds directly to 16S rRNA central domain where it helps coordinate assembly of the platform of the 30S subunit. The polypeptide is Small ribosomal subunit protein uS8 (Mycolicibacterium gilvum (strain PYR-GCK) (Mycobacterium gilvum (strain PYR-GCK))).